Consider the following 1343-residue polypeptide: Spermatogenesis-associated protein 31A6 (1343 aa).

The helical transmembrane segment at 23–43 (PWVLDIFLTLVFALGFFFLLL) threads the bilayer. 6 disordered regions span residues 55–88 (PSPSPGKRKCPVGRRRRPRGRMKNHSLRAGRECP), 106–235 (GPHL…STLI), 624–654 (DESPGTSQAKGKPSPWQSSTSTGESSKEAQK), 895–951 (PRGI…REAV), 1080–1156 (VQEE…PPSV), and 1309–1331 (KAVSPVSPPQHWPKTSGASSHHH). The segment covering 60 to 82 (GKRKCPVGRRRRPRGRMKNHSLR) has biased composition (basic residues). Polar residues predominate over residues 165–178 (LASTPSPGPMTTSV). Residues 198 to 222 (PEPPALFPHPPHTPDPLACSPPPPK) are compositionally biased toward pro residues. Polar residues-rich tracts occupy residues 627–647 (PGTSQAKGKPSPWQSSTSTGE) and 923–944 (LTYSLTGSTQQSRSLGAQSSKA). 2 stretches are compositionally biased toward basic and acidic residues: residues 1104–1123 (HKSEKSRKPNLEKHEERLEG) and 1133–1142 (RKTEDTHQDE).

The protein belongs to the SPATA31 family.

The protein resides in the membrane. Functionally, may play a role in spermatogenesis. This is Spermatogenesis-associated protein 31A6 (SPATA31A6) from Homo sapiens (Human).